Here is a 440-residue protein sequence, read N- to C-terminus: MKMTGWKKKLCRGHHLWALGCYMLLAVVALRLSLRLKCDVDSLDLESRDFQSQRCRDVLYKNLKLPAKRSINCSGITRGDQEAVVQALLDNLEVKKKRLPFTDTYYLNITRDCEQFKAQRKFIQFPLSKEELDFPIAYSMVVHEKIENFERLLRAVYAPQNIYCVHVDVKSPETFKEAVKAIISCFPNVFMASKLVPVVYASWSRVQADLNCMEDLLQSSVPWKYLLNTCGTDFPIKTNAEMVLALKMLNGKNSMESEIPSEYKKNRWKYRYEVTDRLYLTSKMKDPPPDNLPMFTGNAYFVASRAFVQHVLENPKSQRLIEWVKDTYSPDEHLWATLQRAPWMPGSVPYHPKYHISDMTAIARLVKWQGHEGDVSMGAPYAPCSGIHQRAICIYGAGDLHWILQNHHLLANKFDPRVDDNVLQCLEEYLRHKAIYGTEL.

Over 1-12 (MKMTGWKKKLCR) the chain is Cytoplasmic. A helical; Signal-anchor for type II membrane protein membrane pass occupies residues 13 to 30 (GHHLWALGCYMLLAVVAL). The Lumenal segment spans residues 31–440 (RLSLRLKCDV…RHKAIYGTEL (410 aa)). N-linked (GlcNAc...) asparagine glycosylation is found at Asn72 and Asn108. 4 disulfides stabilise this stretch: Cys73–Cys230, Cys164–Cys384, Cys185–Cys212, and Cys393–Cys425.

It belongs to the glycosyltransferase 14 family. Post-translationally, N-glycosylated. As to expression, primarily expressed in mucus-secreting tissues.

Its subcellular location is the golgi apparatus membrane. It carries out the reaction a 3-O-[beta-D-galactosyl-(1-&gt;3)-N-acetyl-alpha-D-galactosaminyl]-L-seryl-[protein] + UDP-N-acetyl-alpha-D-glucosamine = 3-O-{beta-D-galactosyl-(1-&gt;3)-[N-acetyl-beta-D-glucosaminyl-(1-&gt;6)]-N-acetyl-alpha-D-galactosaminyl}-L-seryl-[protein] + UDP + H(+). It catalyses the reaction a 3-O-[beta-D-galactosyl-(1-&gt;3)-N-acetyl-alpha-D-galactosaminyl]-L-threonyl-[protein] + UDP-N-acetyl-alpha-D-glucosamine = a 3-O-{beta-D-galactosyl-(1-&gt;3)-[N-acetyl-beta-D-glucosaminyl-(1-&gt;6)]-N-acetyl-alpha-D-galactosaminyl}-L-threonyl-[protein] + UDP + H(+). The catalysed reaction is a beta-D-Gal-(1-&gt;4)-beta-D-GlcNAc-(1-&gt;3)-beta-D-Gal-(1-&gt;4)-beta-D-GlcNAc derivative + UDP-N-acetyl-alpha-D-glucosamine = a beta-D-Gal-(1-&gt;4)-beta-D-GlcNAc-(1-&gt;3)-[beta-D-GlcNAc-(1-&gt;6)]-beta-D-Gal-(1-&gt;4)-N-acetyl-beta-D-glucosaminyl derivative + UDP + H(+). The enzyme catalyses 3-O-[N-acetyl-beta-D-glucosaminyl-(1-&gt;3)-N-acetyl-alpha-D-galactosaminyl]-L-seryl-[protein] + UDP-N-acetyl-alpha-D-glucosamine = 3-O-[N-acetyl-beta-D-glucosaminyl-(1-&gt;3)-[N-acetyl-beta-D-glucosaminyl-(1-&gt;6)]-N-acetyl-alpha-D-galactosaminyl]-L-seryl-[protein] + UDP + H(+). It carries out the reaction a 3-O-[N-acetyl-beta-D-glucosaminyl-(1-&gt;3)-N-acetyl-alpha-D-galactosaminyl]-L-threonyl-[protein] + UDP-N-acetyl-alpha-D-glucosamine = 3-O-[N-acetyl-beta-D-glucosaminyl-(1-&gt;3)-[N-acetyl-beta-D-glucosaminyl-(1-&gt;6)]-N-acetyl-alpha-D-galactosaminyl]-L-threonyl-[protein] + UDP + H(+). The protein operates within protein modification; protein glycosylation. Its function is as follows. Glycosyltransferase that can synthesize all known mucin beta 6 N-acetylglucosaminides. Mediates core 2 and core 4 O-glycan branching, 2 important steps in mucin-type biosynthesis. Also has I-branching enzyme activity by converting linear into branched poly-N-acetyllactosaminoglycans, leading to introduce the blood group I antigen during embryonic development. This chain is Beta-1,3-galactosyl-O-glycosyl-glycoprotein beta-1,6-N-acetylglucosaminyltransferase 3 (GCNT3), found in Bos taurus (Bovine).